The sequence spans 148 residues: Nucleoside diphosphate kinase 1 (148 aa).

Positions 9, 57, 85, 91, 102, and 112 each coordinate ATP. H115 functions as the Pros-phosphohistidine intermediate in the catalytic mechanism.

This sequence belongs to the NDK family. Mg(2+) is required as a cofactor.

The catalysed reaction is a 2'-deoxyribonucleoside 5'-diphosphate + ATP = a 2'-deoxyribonucleoside 5'-triphosphate + ADP. The enzyme catalyses a ribonucleoside 5'-diphosphate + ATP = a ribonucleoside 5'-triphosphate + ADP. Its function is as follows. Major role in the synthesis of nucleoside triphosphates other than ATP. The ATP gamma phosphate is transferred to the NDP beta phosphate via a ping-pong mechanism, using a phosphorylated active-site intermediate. This chain is Nucleoside diphosphate kinase 1 (NDKP1), found in Mesembryanthemum crystallinum (Common ice plant).